The primary structure comprises 461 residues: Probable metabolite transport protein CsbC (461 aa).

At 1 to 14 the chain is on the cytoplasmic side; the sequence is MKKDTRKYMIYFFG. The helical transmembrane segment at 15–35 threads the bilayer; that stretch reads ALGGLLYGYDTGVISGALLFI. The Extracellular segment spans residues 36-38; sequence NND. A helical transmembrane segment spans residues 39–59; it reads IPLTTLTEGLVVSMLLLGAIF. Over 60–76 the chain is Cytoplasmic; it reads GSALSGTCSDRWGRRKV. A helical membrane pass occupies residues 77 to 97; it reads VFVLSIIFIIGALACAFSQTI. At 98–104 the chain is on the extracellular side; the sequence is GMLIASR. Residues 105 to 125 traverse the membrane as a helical segment; that stretch reads VILGLAVGGSTALVPVYLSEM. Residues 126 to 139 lie on the Cytoplasmic side of the membrane; the sequence is APTKIRGTLGTMNN. The helical transmembrane segment at 140–160 threads the bilayer; it reads LMIVTGILLAYIVNYLFTPFE. The Extracellular segment spans residues 161-163; the sequence is AWR. The chain crosses the membrane as a helical span at residues 164–184; sequence WMVGLAAVPAVLLLIGIAFMP. Residues 185-241 are Cytoplasmic-facing; that stretch reads ESPRWLVKRGSEEEARRIMNITHDPKDIEMELAEMKQGEAEKKETTLGVLKAKWIRP. A helical transmembrane segment spans residues 242 to 262; it reads MLLIGVGLAIFQQAVGINTVI. Over 263–280 the chain is Extracellular; that stretch reads YYAPTIFTKAGLGTSASA. Residues 281–301 form a helical membrane-spanning segment; sequence LGTMGIGILNVIMCITAMILI. The Cytoplasmic segment spans residues 302–308; the sequence is DRVGRKK. A helical transmembrane segment spans residues 309-329; the sequence is LLIWGSVGITLSLAALSGVLL. Over 330–341 the chain is Extracellular; that stretch reads TLGLSASTAWMT. The helical transmembrane segment at 342–362 threads the bilayer; the sequence is VVFLGVYIVFYQATWGPVVWV. The Cytoplasmic portion of the chain corresponds to 363–378; that stretch reads LMPELFPSKARGAATG. The helical transmembrane segment at 379 to 399 threads the bilayer; the sequence is FTTLVLSAANLIVSLVFPLML. The Extracellular segment spans residues 400–402; sequence SAM. The chain crosses the membrane as a helical span at residues 403–423; the sequence is GIAWVFMVFSVICLLSFFFAF. Over 424 to 461 the chain is Cytoplasmic; the sequence is YMVPETKGKSLEEIEASLKKRFKKKKSTQNQVLNERTL.

This sequence belongs to the major facilitator superfamily. Sugar transporter (TC 2.A.1.1) family.

The protein resides in the cell membrane. In terms of biological role, could serve either a nutritional or an osmotic protection function. The polypeptide is Probable metabolite transport protein CsbC (csbC) (Bacillus subtilis (strain 168)).